The chain runs to 344 residues: Holliday junction branch migration complex subunit RuvB (344 aa).

Positions 1-181 (MERIVTPAEM…FGVLCAMEYY (181 aa)) are large ATPase domain (RuvB-L). Residues L20, R21, G62, K65, T66, T67, 128–130 (EDY), R171, Y181, and R218 contribute to the ATP site. T66 serves as a coordination point for Mg(2+). The tract at residues 182–252 (DENQLKEIVI…EAREALELLE (71 aa)) is small ATPAse domain (RuvB-S). Residues 255–344 (NQGFDKVDNK…SNKGQTSFFK (90 aa)) are head domain (RuvB-H). Residues R310 and R315 each contribute to the DNA site.

It belongs to the RuvB family. Homohexamer. Forms an RuvA(8)-RuvB(12)-Holliday junction (HJ) complex. HJ DNA is sandwiched between 2 RuvA tetramers; dsDNA enters through RuvA and exits via RuvB. An RuvB hexamer assembles on each DNA strand where it exits the tetramer. Each RuvB hexamer is contacted by two RuvA subunits (via domain III) on 2 adjacent RuvB subunits; this complex drives branch migration. In the full resolvosome a probable DNA-RuvA(4)-RuvB(12)-RuvC(2) complex forms which resolves the HJ.

It localises to the cytoplasm. The enzyme catalyses ATP + H2O = ADP + phosphate + H(+). The RuvA-RuvB-RuvC complex processes Holliday junction (HJ) DNA during genetic recombination and DNA repair, while the RuvA-RuvB complex plays an important role in the rescue of blocked DNA replication forks via replication fork reversal (RFR). RuvA specifically binds to HJ cruciform DNA, conferring on it an open structure. The RuvB hexamer acts as an ATP-dependent pump, pulling dsDNA into and through the RuvAB complex. RuvB forms 2 homohexamers on either side of HJ DNA bound by 1 or 2 RuvA tetramers; 4 subunits per hexamer contact DNA at a time. Coordinated motions by a converter formed by DNA-disengaged RuvB subunits stimulates ATP hydrolysis and nucleotide exchange. Immobilization of the converter enables RuvB to convert the ATP-contained energy into a lever motion, pulling 2 nucleotides of DNA out of the RuvA tetramer per ATP hydrolyzed, thus driving DNA branch migration. The RuvB motors rotate together with the DNA substrate, which together with the progressing nucleotide cycle form the mechanistic basis for DNA recombination by continuous HJ branch migration. Branch migration allows RuvC to scan DNA until it finds its consensus sequence, where it cleaves and resolves cruciform DNA. This is Holliday junction branch migration complex subunit RuvB from Clostridium botulinum (strain Alaska E43 / Type E3).